The sequence spans 205 residues: High frequency lysogenization protein HflD homolog (205 aa).

Belongs to the HflD family.

The protein localises to the cytoplasm. The protein resides in the cell inner membrane. The sequence is that of High frequency lysogenization protein HflD homolog from Vibrio atlanticus (strain LGP32) (Vibrio splendidus (strain Mel32)).